A 270-amino-acid chain; its full sequence is SURF1-like protein (270 aa).

Transmembrane regions (helical) follow at residues 7–29 and 246–265; these read GFKL…VYRY and YIGT…FRYM.

It belongs to the SURF1 family.

The protein resides in the mitochondrion inner membrane. In terms of biological role, probably involved in the biogenesis of the COX complex. This chain is SURF1-like protein (surf1-1), found in Dictyostelium discoideum (Social amoeba).